The chain runs to 317 residues: Beta-ketoacyl-[acyl-carrier-protein] synthase III (317 aa).

Residues Cys112 and His244 contribute to the active site. The segment at 245 to 249 is ACP-binding; it reads QANLR. Asn274 is an active-site residue.

This sequence belongs to the thiolase-like superfamily. FabH family. As to quaternary structure, homodimer.

It localises to the cytoplasm. The catalysed reaction is malonyl-[ACP] + acetyl-CoA + H(+) = 3-oxobutanoyl-[ACP] + CO2 + CoA. Its pathway is lipid metabolism; fatty acid biosynthesis. Functionally, catalyzes the condensation reaction of fatty acid synthesis by the addition to an acyl acceptor of two carbons from malonyl-ACP. Catalyzes the first condensation reaction which initiates fatty acid synthesis and may therefore play a role in governing the total rate of fatty acid production. Possesses both acetoacetyl-ACP synthase and acetyl transacylase activities. Its substrate specificity determines the biosynthesis of branched-chain and/or straight-chain of fatty acids. This chain is Beta-ketoacyl-[acyl-carrier-protein] synthase III, found in Citrobacter koseri (strain ATCC BAA-895 / CDC 4225-83 / SGSC4696).